The sequence spans 207 residues: Large ribosomal subunit protein uL3 (207 aa).

Residues 126 to 149 (GPASHGSKKWHRRPGSIGQRKTPG) are disordered.

Belongs to the universal ribosomal protein uL3 family. As to quaternary structure, part of the 50S ribosomal subunit. Forms a cluster with proteins L14 and L19.

One of the primary rRNA binding proteins, it binds directly near the 3'-end of the 23S rRNA, where it nucleates assembly of the 50S subunit. In Deinococcus geothermalis (strain DSM 11300 / CIP 105573 / AG-3a), this protein is Large ribosomal subunit protein uL3.